Consider the following 749-residue polypeptide: EF-hand domain-containing family member C2 (749 aa).

3 DM10 domains span residues D75–G182, H226–Y368, and K431–T538. The EF-hand domain maps to G558–G593.

As to quaternary structure, microtubule inner protein component of sperm flagellar doublet microtubules. Expressed in airway epithelial cells.

It localises to the cytoplasm. It is found in the cytoskeleton. The protein localises to the cilium axoneme. The protein resides in the flagellum axoneme. Microtubule inner protein (MIP) part of the dynein-decorated doublet microtubules (DMTs) in cilia axoneme, which is required for motile cilia beating. The protein is EF-hand domain-containing family member C2 of Homo sapiens (Human).